The chain runs to 508 residues: Light-independent protochlorophyllide reductase subunit B (508 aa).

Asp36 is a [4Fe-4S] cluster binding site. Asp294 serves as the catalytic Proton donor. 429 to 430 (GM) is a binding site for substrate.

It belongs to the ChlB/BchB/BchZ family. Protochlorophyllide reductase is composed of three subunits; ChlL, ChlN and ChlB. Forms a heterotetramer of two ChlB and two ChlN subunits. It depends on [4Fe-4S] cluster as a cofactor.

The enzyme catalyses chlorophyllide a + oxidized 2[4Fe-4S]-[ferredoxin] + 2 ADP + 2 phosphate = protochlorophyllide a + reduced 2[4Fe-4S]-[ferredoxin] + 2 ATP + 2 H2O. The protein operates within porphyrin-containing compound metabolism; chlorophyll biosynthesis (light-independent). Component of the dark-operative protochlorophyllide reductase (DPOR) that uses Mg-ATP and reduced ferredoxin to reduce ring D of protochlorophyllide (Pchlide) to form chlorophyllide a (Chlide). This reaction is light-independent. The NB-protein (ChlN-ChlB) is the catalytic component of the complex. In Synechococcus elongatus (strain ATCC 33912 / PCC 7942 / FACHB-805) (Anacystis nidulans R2), this protein is Light-independent protochlorophyllide reductase subunit B.